We begin with the raw amino-acid sequence, 375 residues long: Palmitoyltransferase PFA4 (375 aa).

The Cytoplasmic segment spans residues 1 to 9; the sequence is MAVLVKWPW. The helical transmembrane segment at 10–30 threads the bilayer; sequence LGVAIPCFLISFTGYFAHFFV. Residues 31–33 lie on the Lumenal side of the membrane; it reads LTN. A helical membrane pass occupies residues 34–54; sequence FLSFKELLWFQVSLSMIWISY. Over 55 to 121 the chain is Cytoplasmic; it reads WKAIYKNPGR…MNCVGYKNFP (67 aa). Positions 78–128 constitute a DHHC domain; the sequence is NYCTKCETYKPERTHHCKRCNQCVLVMDHHCPWTMNCVGYKNFPHFIRFLF. The S-palmitoyl cysteine intermediate role is filled by Cys108. A helical transmembrane segment spans residues 122–142; the sequence is HFIRFLFWIIATTGILLHYFV. Topologically, residues 143-164 are lumenal; the sequence is KRIKFTWVNRYATANLVSKQEL. A helical transmembrane segment spans residues 165–185; it reads IFLTILTPLDAFILLTISLLF. The Cytoplasmic segment spans residues 186–375; the sequence is VRCVKNQIVN…EHFGVDVEVE (190 aa).

Belongs to the DHHC palmitoyltransferase family. PFA4 subfamily.

It localises to the endoplasmic reticulum membrane. It carries out the reaction L-cysteinyl-[protein] + hexadecanoyl-CoA = S-hexadecanoyl-L-cysteinyl-[protein] + CoA. In terms of biological role, mediates the reversible addition of palmitate to target proteins, thereby regulating their membrane association and biological function. This Eremothecium gossypii (strain ATCC 10895 / CBS 109.51 / FGSC 9923 / NRRL Y-1056) (Yeast) protein is Palmitoyltransferase PFA4.